A 420-amino-acid polypeptide reads, in one-letter code: MVSRFFSWTNEKPLGDQRAHLPDSFLELEQEIAIREEGLSKLFQATTIWIDSILKKVDGEDKEKCLACENLGKVMINHSKELPQDSSYGITLSQLGKANLKIGEHQTSLAYKARVCYLDFLKRYLVQAKDFHSARKKLESRRQAYESLLQKSFKEKKEDSRLEEDIRLALYKFEESTEQVKNRMIALKDVEADQYQQLTELIVYELNFFKESTGILNTIFNSQNSLTPQKKIQSSERSVENEFLASPMDPSLSKLFTKTTNTEKISPTPFSTPKRKSKKETVFVKAIYSFTGRNEKELDLHTGDVIQVSEQLGPDWYMGEKVNSKAEKLGNSGMFPVNYCTRIYDLHVQKSHETRSLERARSIRRIVSDDPRDYCSPIKQSPIQNLKFLDSDNSLLSSQNVEASSQPIKIRKPLPEIPNK.

The BAR domain maps to 10 to 232; it reads NEKPLGDQRA…QNSLTPQKKI (223 aa). The SH3 domain occupies 279–345; sequence KETVFVKAIY…PVNYCTRIYD (67 aa). Residues 398–420 form a disordered region; it reads SQNVEASSQPIKIRKPLPEIPNK.

It localises to the cytoplasm. It is found in the nucleus. Functionally, has a role in meiosis and sporulation. The chain is Meiotically up-regulated gene 137 protein (mug137) from Schizosaccharomyces pombe (strain 972 / ATCC 24843) (Fission yeast).